Here is a 421-residue protein sequence, read N- to C-terminus: Protein OS-9 homolog (421 aa).

Residues 1 to 26 (MWRWSTGVRTMLGYAMCFLALGSALT) form the signal peptide. Positions 99–220 (EEATVGKKLE…LVSIPSLCEL (122 aa)) constitute an MRH domain. Residue Trp115 coordinates a mannooligosaccharide derivative. Asn125 is a glycosylation site (N-linked (GlcNAc...) asparagine). 2 disulfide bridges follow: Cys173/Cys206 and Cys188/Cys218. Positions 180, 202, and 208 each coordinate a mannooligosaccharide derivative. Residues Asn271 and Asn332 are each glycosylated (N-linked (GlcNAc...) asparagine). Residues 375-394 (GNSEDYEQQAPEQLDEEEAE) are compositionally biased toward acidic residues. The disordered stretch occupies residues 375-403 (GNSEDYEQQAPEQLDEEEAELTSQSDDPA).

Belongs to the OS-9 family. In terms of assembly, interacts with missfolded ER lumenal proteins.

The protein localises to the endoplasmic reticulum membrane. Its function is as follows. Lectin involved in the quality control of the secretory pathway. As a member of the endoplasmic reticulum-associated degradation lumenal (ERAD-L) surveillance system, targets misfolded endoplasmic reticulum lumenal glycoproteins for degradation. This Eremothecium gossypii (strain ATCC 10895 / CBS 109.51 / FGSC 9923 / NRRL Y-1056) (Yeast) protein is Protein OS-9 homolog (YOS9).